A 334-amino-acid polypeptide reads, in one-letter code: HTH-type transcriptional repressor PurR (334 aa).

An HTH lacI-type domain is found at 2–56 (ATIKDVARLAGVSTTTVSHVINKTRFVAETTQEKVMKAVDELNYAPSAVARSLKC). The H-T-H motif DNA-binding region spans 4-23 (IKDVARLAGVSTTTVSHVIN). The DNA-binding element occupies 48 to 56 (SAVARSLKC). 4 residues coordinate hypoxanthine: Phe-73, Lys-189, Phe-220, and Asp-274.

Homodimer.

Its pathway is purine metabolism; purine nucleotide biosynthesis [regulation]. Functionally, is the main repressor of the genes involved in the de novo synthesis of purine nucleotides, regulating purB, purC, purEK, purF, purHD, purL, purMN and guaBA expression. PurR is allosterically activated to bind its cognate DNA by binding the purine corepressors, hypoxanthine or guanine, thereby effecting transcription repression. This chain is HTH-type transcriptional repressor PurR, found in Vibrio campbellii (strain ATCC BAA-1116).